The sequence spans 273 residues: Lactose transport system permease protein LacG (273 aa).

A run of 6 helical transmembrane segments spans residues 15 to 35 (YSVL…MVIG), 77 to 97 (IALV…YGFE), 110 to 130 (VILL…FMLM), 134 to 154 (GLLN…FIIF), 182 to 204 (FFYI…VFML), and 240 to 260 (GTVM…FFAM). In terms of domain architecture, ABC transmembrane type-1 spans 71 to 260 (FWNSVKIALV…LPTLLVFFAM (190 aa)).

This sequence belongs to the binding-protein-dependent transport system permease family. MalFG subfamily.

The protein resides in the cell inner membrane. Part of the binding-protein-dependent transport system for lactose. Probably responsible for the translocation of the substrate across the membrane. This chain is Lactose transport system permease protein LacG (lacG), found in Rhizobium radiobacter (Agrobacterium tumefaciens).